The following is a 983-amino-acid chain: Probable serine/threonine-protein kinase mps1 (983 aa).

The span at 1–18 (MDTHQSFNENQHPNFNSG) shows a compositional bias: polar residues. Disordered stretches follow at residues 1–26 (MDTH…INMN), 252–430 (PQQQ…NNNY), 441–460 (NNDS…NSSV), 513–601 (QQQQ…QQQQ), and 654–691 (QQEQ…SEIV). Residues 253 to 278 (QQQQQQQQQPYEISSSSSLMSTPASS) show a composition bias toward low complexity. The segment covering 279–301 (RHLSNRSSIVPTPNSSTKLSESI) has biased composition (polar residues). Composition is skewed to low complexity over residues 319-329 (TTTNFNTTTTT) and 348-371 (NNNN…SYNK). The segment covering 374–403 (NDEDDQDEEDEEEEDEDEDDDEEDEEEYED) has biased composition (acidic residues). Residues 380–430 (DEEDEEEEDEDEDDDEEDEEEYEDNNNNNNNNNNNNNNNNNNNNNNNNNNY) adopt a coiled-coil conformation. Positions 404-429 (NNNNNNNNNNNNNNNNNNNNNNNNNN) are enriched in low complexity. Positions 474–517 (KLDYENNVKLQQQQQQQQQQQQQQQQQQQQQQQQQYIQQQQQQQ) form a coiled coil. Residues 529-563 (NNTPTTTTTTTAATNVQNPSSSSSYISPPLSSQSS) show a composition bias toward low complexity. A coiled-coil region spans residues 588 to 665 (SKLHQNNLQQ…EQQLKKTNMQ (78 aa)). Positions 673 to 683 (QPQTQTQQQQK) are enriched in low complexity. The Protein kinase domain maps to 714 to 981 (YLRIEFIGKG…IPTLLNHDFL (268 aa)). Residues 720–728 (IGKGGSGKV) and K742 contribute to the ATP site. Catalysis depends on D838, which acts as the Proton acceptor.

The protein belongs to the protein kinase superfamily. Ser/Thr protein kinase family.

The enzyme catalyses L-seryl-[protein] + ATP = O-phospho-L-seryl-[protein] + ADP + H(+). It carries out the reaction L-threonyl-[protein] + ATP = O-phospho-L-threonyl-[protein] + ADP + H(+). In Dictyostelium discoideum (Social amoeba), this protein is Probable serine/threonine-protein kinase mps1 (mps1).